A 190-amino-acid chain; its full sequence is 3-isopropylmalate dehydratase small subunit (190 aa).

The protein belongs to the LeuD family. LeuD type 1 subfamily. In terms of assembly, heterodimer of LeuC and LeuD.

It carries out the reaction (2R,3S)-3-isopropylmalate = (2S)-2-isopropylmalate. Its pathway is amino-acid biosynthesis; L-leucine biosynthesis; L-leucine from 3-methyl-2-oxobutanoate: step 2/4. Catalyzes the isomerization between 2-isopropylmalate and 3-isopropylmalate, via the formation of 2-isopropylmaleate. In Staphylococcus aureus (strain MRSA252), this protein is 3-isopropylmalate dehydratase small subunit.